The chain runs to 212 residues: Thymidylate kinase (212 aa).

ATP is bound at residue 11–18 (GPDGAGKT).

Belongs to the thymidylate kinase family.

It catalyses the reaction dTMP + ATP = dTDP + ADP. Its function is as follows. Phosphorylation of dTMP to form dTDP in both de novo and salvage pathways of dTTP synthesis. The sequence is that of Thymidylate kinase from Streptococcus mutans serotype c (strain ATCC 700610 / UA159).